The chain runs to 278 residues: Putative cysteine-rich repeat secretory protein 17 (278 aa).

An N-terminal signal peptide occupies residues 1 to 32 (MYSLSSVSKHLILVHILALVATQLLLIRSVSS). 2 Gnk2-homologous domains span residues 39 to 142 (YLNH…SIDN) and 148 to 265 (YGDS…LYPF).

It belongs to the cysteine-rich repeat secretory protein family.

It is found in the secreted. The protein is Putative cysteine-rich repeat secretory protein 17 (CRRSP17) of Arabidopsis thaliana (Mouse-ear cress).